We begin with the raw amino-acid sequence, 280 residues long: Eukaryotic translation initiation factor 3 subunit F-1 (280 aa).

In terms of domain architecture, MPN spans 8–138; that stretch reads VRVHPVVLFQ…LRAYVCIQLG (131 aa).

It belongs to the eIF-3 subunit F family. In terms of assembly, component of the eukaryotic translation initiation factor 3 (eIF-3) complex. The eIF-3 complex interacts with pix.

The protein resides in the cytoplasm. Component of the eukaryotic translation initiation factor 3 (eIF-3) complex, which is involved in protein synthesis of a specialized repertoire of mRNAs and, together with other initiation factors, stimulates binding of mRNA and methionyl-tRNAi to the 40S ribosome. The eIF-3 complex specifically targets and initiates translation of a subset of mRNAs involved in cell proliferation. This chain is Eukaryotic translation initiation factor 3 subunit F-1, found in Drosophila erecta (Fruit fly).